Reading from the N-terminus, the 216-residue chain is Protein-L-isoaspartate O-methyltransferase (216 aa).

Ser-65 is an active-site residue.

It belongs to the methyltransferase superfamily. L-isoaspartyl/D-aspartyl protein methyltransferase family.

It is found in the cytoplasm. It catalyses the reaction [protein]-L-isoaspartate + S-adenosyl-L-methionine = [protein]-L-isoaspartate alpha-methyl ester + S-adenosyl-L-homocysteine. Catalyzes the methyl esterification of L-isoaspartyl residues in peptides and proteins that result from spontaneous decomposition of normal L-aspartyl and L-asparaginyl residues. It plays a role in the repair and/or degradation of damaged proteins. This chain is Protein-L-isoaspartate O-methyltransferase, found in Chlorobium phaeobacteroides (strain DSM 266 / SMG 266 / 2430).